The sequence spans 393 residues: (S)-mandelate dehydrogenase (393 aa).

Positions 1–377 constitute an FMN hydroxy acid dehydrogenase domain; it reads MSQNLFNVED…SPDYLQNEGV (377 aa). Position 26 (Tyr-26) interacts with (S)-mandelate. Residues 79–81, Ser-108, and Gln-129 contribute to the FMN site; that span reads PTG. Tyr-131 is a binding site for (S)-mandelate. Thr-156 serves as a coordination point for FMN. Arg-165 serves as a coordination point for (S)-mandelate. Lys-250 provides a ligand contact to FMN. (S)-mandelate-binding residues include His-274 and Arg-277. His-274 functions as the Proton acceptor in the catalytic mechanism. FMN is bound by residues 303–307 and 326–327; these read DSGFR and GR.

It belongs to the FMN-dependent alpha-hydroxy acid dehydrogenase family. Homotetramer. FMN serves as cofactor.

The protein resides in the cell inner membrane. The enzyme catalyses (S)-mandelate + A = phenylglyoxylate + AH2. It functions in the pathway aromatic compound metabolism; (R)-mandelate degradation; benzoate from (R)-mandelate: step 2/4. Functionally, catalyzes the dehydrogenation of (S)-mandelate to phenylglyoxylate (benzoylformate). Is likely involved in the utilization of mandelate as a sole source of carbon and energy for growth. Active in vitro with the artificial electron acceptors 2,6-dichlorophenolindophenol (DCPIP) or ferricyanide, but in vivo most likely transfer the electron pair from the reduced flavin to a component of the electron transport chain in the membrane, possibly a quinone. Shows very low activity with oxygen as the electron acceptor, and also with 3-indolelactate and medium chain 2-hydroxyacids as substrates. The protein is (S)-mandelate dehydrogenase of Pseudomonas putida (Arthrobacter siderocapsulatus).